Reading from the N-terminus, the 132-residue chain is Secreted RxLR effector protein BLR08 (132 aa).

The first 22 residues, 1–22 (MRHKCLLAMAVVASMAFYSVIS), serve as a signal peptide directing secretion. N-linked (GlcNAc...) asparagine glycosylation is present at Asn-25. Residues 36-57 (NRRLRPRVEPTANELDKQSDVD) are disordered. The RxLR-dEER motif lies at 37 to 83 (RRLRPRVEPTANELDKQSDVDTKLEADRRLGYPGESGFMLEGELEER). Residues 111–131 (FFLGLFASVIGVSIISACYGI) form a helical membrane-spanning segment.

Belongs to the RxLR effector family. As to quaternary structure, interacts with host transcription factor NAC069.

The protein localises to the secreted. It is found in the host endoplasmic reticulum membrane. Its function is as follows. Secreted effector that inhibits stress-induced relocalization of the transcription factor NAC069 to the nucleus, thus affecting its broad role in abiotic and biotic stress responses. The chain is Secreted RxLR effector protein BLR08 from Bremia lactucae (Lettuce downy mildew).